Reading from the N-terminus, the 386-residue chain is Ribonucleoside-diphosphate reductase subunit M2 (386 aa).

A Phosphoserine modification is found at serine 20. Residue threonine 33 is modified to Phosphothreonine. Residues arginine 49–isoleucine 51 carry the Cy motif. Residues aspartate 139, glutamate 170, and histidine 173 each coordinate Fe cation. Tyrosine 177 is an active-site residue. Positions 233, 267, and 270 each coordinate Fe cation.

It belongs to the ribonucleoside diphosphate reductase small chain family. Heterodimer of a large and a small subunit. Interacts (via Cy motif and when phosphorylated at Thr-33) with CCNF; the interaction occurs exclusively in G2 and early M. Fe cation serves as cofactor. In terms of processing, phosphorylation on Ser-20 relieves the inhibitory effect on Wnt signaling. Phosphorylated on Thr-33 by CDK1 and CDK2; predominantly in G2 and M phase. Post-translationally, ubiquitinated by the SCF(CCNF) E3 ubiquitin-protein ligase complex; leading to its degradation by the proteasome.

It is found in the cytoplasm. It localises to the nucleus. It carries out the reaction a 2'-deoxyribonucleoside 5'-diphosphate + [thioredoxin]-disulfide + H2O = a ribonucleoside 5'-diphosphate + [thioredoxin]-dithiol. Functionally, provides the precursors necessary for DNA synthesis. Catalyzes the biosynthesis of deoxyribonucleotides from the corresponding ribonucleotides. Inhibits Wnt signaling. The chain is Ribonucleoside-diphosphate reductase subunit M2 (RRM2) from Mesocricetus auratus (Golden hamster).